We begin with the raw amino-acid sequence, 798 residues long: Bromodomain-containing protein 2 (798 aa).

Met1 carries the post-translational modification N-acetylmethionine. The tract at residues 1-21 is disordered; sequence MLQNVTPHKLPGEGNAGLLGL. A Phosphothreonine modification is found at Thr6. Ser36 is modified (phosphoserine). The disordered stretch occupies residues 53–72; it reads LQLAPANPPPPEVSNPKKPG. A Bromo 1 domain is found at 73-179; sequence RVTNQLQYLH…KIFLQKVASM (107 aa). A protein is bound by residues Asp111, Tyr154, Asn155, Lys156, Asp159, and Asp160. Disordered stretches follow at residues 267–348, 454–645, and 736–798; these read PPAQ…LSEQ, DEPL…YDEK, and KRLQ…SDSG. Low complexity predominate over residues 284–297; it reads TTTPTPTAILAPGS. Phosphoserine is present on residues Ser297, Ser300, and Ser304. The span at 315-331 shows a compositional bias: basic and acidic residues; the sequence is MRRESGRPIKPPRKDLP. The Bromo 2 domain maps to 343–452; that stretch reads GKLSEQLKHC…DVFEFRYAKM (110 aa). The segment covering 480 to 512 has biased composition (acidic residues); sequence SSEESSSESSSEEEEEEEEDEDEEESESSDSEE. Basic residues predominate over residues 542 to 564; the sequence is KPKRKREKKEKKKKRKAEKHRGR. The Nuclear localization signal motif lies at 553 to 557; sequence KKKRK. The NET domain maps to 630 to 712; the sequence is DSEEEEESRP…SCLRKKPRKP (83 aa). Residue Ser631 is modified to Phosphoserine. Positions 772–792 are enriched in low complexity; it reads SASSSSSDSSSSSSSSSSSDT.

The protein belongs to the BET family. In terms of assembly, homodimer. Interacts with E2F1. Interacts with (acetylated) STAT3; promoting STAT3 recruitment to chromatin. Interacts with CTCF; promoting BRD2 recruitment to chromatin. As to expression, predominantly expressed in the testis, followed by ovary, placenta, embryo and to a lower extent in somatic tissues.

The protein localises to the nucleus. It localises to the chromosome. Chromatin reader protein that specifically recognizes and binds histone H4 acetylated at 'Lys-5' and 'Lys-12' (H4K5ac and H4K12ac, respectively), thereby controlling gene expression and remodeling chromatin structures. Recruits transcription factors and coactivators to target gene sites, and activates RNA polymerase II machinery for transcriptional elongation. Plays a key role in genome compartmentalization via its association with CTCF and cohesin: recruited to chromatin by CTCF and promotes formation of topologically associating domains (TADs) via its ability to bind acetylated histones, contributing to CTCF boundary formation and enhancer insulation. Also recognizes and binds acetylated non-histone proteins, such as STAT3. Involved in inflammatory response by regulating differentiation of naive CD4(+) T-cells into T-helper Th17: recognizes and binds STAT3 acetylated at 'Lys-87', promoting STAT3 recruitment to chromatin. In addition to acetylated lysines, also recognizes and binds lysine residues on histones that are both methylated and acetylated on the same side chain to form N6-acetyl-N6-methyllysine (Kacme), an epigenetic mark of active chromatin associated with increased transcriptional initiation. Specifically binds histone H4 acetyl-methylated at 'Lys-5' and 'Lys-12' (H4K5acme and H4K12acme, respectively). The protein is Bromodomain-containing protein 2 of Mus musculus (Mouse).